We begin with the raw amino-acid sequence, 316 residues long: Methionyl-tRNA formyltransferase (316 aa).

Position 113–116 (113–116 (SLLP)) interacts with (6S)-5,6,7,8-tetrahydrofolate.

It belongs to the Fmt family.

It carries out the reaction L-methionyl-tRNA(fMet) + (6R)-10-formyltetrahydrofolate = N-formyl-L-methionyl-tRNA(fMet) + (6S)-5,6,7,8-tetrahydrofolate + H(+). In terms of biological role, attaches a formyl group to the free amino group of methionyl-tRNA(fMet). The formyl group appears to play a dual role in the initiator identity of N-formylmethionyl-tRNA by promoting its recognition by IF2 and preventing the misappropriation of this tRNA by the elongation apparatus. The sequence is that of Methionyl-tRNA formyltransferase from Proteus mirabilis (strain HI4320).